Consider the following 880-residue polypeptide: MOG interacting and ectopic P-granules protein 1 (880 aa).

Residues 1–20 show a composition bias toward polar residues; that stretch reads MVTSDETVLATTTNKTSITT. 3 disordered regions span residues 1 to 37, 82 to 257, and 350 to 370; these read MVTS…SETD, DKVE…DDNE, and ERPK…QHNP. Residues 23-37 are compositionally biased toward basic and acidic residues; sequence MEPKSSDESTDSETD. Over residues 87–105 the composition is skewed to polar residues; that stretch reads ATNSVVDLSSNGSSATTSV. The span at 108–120 shows a compositional bias: acidic residues; sequence EEQEEKANEDETN. 2 stretches are compositionally biased toward basic and acidic residues: residues 154–170 and 183–193; these read SKSD…IKDS and KPEEKEEKNDT. Residues 215–224 are compositionally biased toward acidic residues; sequence QLDDDDDDIQ. 2 stretches are compositionally biased toward basic and acidic residues: residues 235–252 and 350–364; these read QKTE…KAEP and ERPK…ERQQ. 2 consecutive C2H2-type zinc fingers follow at residues 436-459 and 465-488; these read SRCG…ETLH and FQCT…FEAH. The CCHC-type zinc finger occupies 501-523; the sequence is YPCAICEEDFNFKGVREQHYKQC. C2H2-type zinc fingers lie at residues 728–751, 768–791, 809–830, and 841–864; these read FQCE…QVLH, LACS…VMSH, GRCK…VADH, and YSCD…SSTH.

As to quaternary structure, interacts with hda-1, let-418, lin-1, mog-1, mog-4, mog-5, mog-6, pie-1 and unc-98.

Its subcellular location is the nucleus. Its function is as follows. Has a broad role in development, specifically in the genetic pathway SynMuvB that negatively regulates specification of the vulval cell fate. Required for fem-3 3'-UTR-mediated repression in the regulation of the sperm/oocyte switch. Acts by regulating the translation of fem-3 mRNA, by binding to its 3'-UTR. This Caenorhabditis briggsae protein is MOG interacting and ectopic P-granules protein 1.